Consider the following 287-residue polypeptide: Mu-like prophage FluMu DNA transposition protein B (287 aa).

In terms of domain architecture, HTH cro/C1-type spans 7-62 (LKQHLSDSQITQAQLAREAGVNAGALSAYLNDNYKGNIADVEAKLAAYLEKKAVQA). The segment at residues 18 to 37 (QAQLAREAGVNAGALSAYLN) is a DNA-binding region (H-T-H motif). Residue 98–105 (GMSGVGKT) coordinates ATP.

Functionally, this protein is a non-specific DNA-binding and ATP-hydrolyzing protein essential for bacteriophage integration and replication. This Haemophilus influenzae (strain ATCC 51907 / DSM 11121 / KW20 / Rd) protein is Mu-like prophage FluMu DNA transposition protein B.